A 523-amino-acid chain; its full sequence is 2-isopropylmalate synthase (523 aa).

Positions 5-267 (VIIFDTTLRD…HTAINHQEIW (263 aa)) constitute a Pyruvate carboxyltransferase domain. Mn(2+) contacts are provided by Asp-14, His-202, His-204, and Asn-238. A regulatory domain region spans residues 392-523 (RLDYFSVQSG…QHNENNKETV (132 aa)).

It belongs to the alpha-IPM synthase/homocitrate synthase family. LeuA type 1 subfamily. As to quaternary structure, homodimer. Mn(2+) is required as a cofactor.

Its subcellular location is the cytoplasm. The catalysed reaction is 3-methyl-2-oxobutanoate + acetyl-CoA + H2O = (2S)-2-isopropylmalate + CoA + H(+). It functions in the pathway amino-acid biosynthesis; L-leucine biosynthesis; L-leucine from 3-methyl-2-oxobutanoate: step 1/4. Its function is as follows. Catalyzes the condensation of the acetyl group of acetyl-CoA with 3-methyl-2-oxobutanoate (2-ketoisovalerate) to form 3-carboxy-3-hydroxy-4-methylpentanoate (2-isopropylmalate). The sequence is that of 2-isopropylmalate synthase from Shigella flexneri.